Reading from the N-terminus, the 84-residue chain is Beta-cardiotoxin CTX9 (84 aa).

The first 21 residues, 1–21, serve as a signal peptide directing secretion; that stretch reads MKTLLLTLVVVTIVCLDLGYT. Cystine bridges form between Cys24–Cys43, Cys36–Cys61, Cys65–Cys76, and Cys77–Cys82.

Belongs to the three-finger toxin family. Short-chain subfamily. Aminergic toxin sub-subfamily. Expressed by the venom gland.

Its subcellular location is the secreted. In terms of biological role, acts as a beta-blocker by binding to beta-1 and beta-2 adrenergic receptors (ADRB1 and ADRB2). It dose-dependently decreases the heart rate (bradycardia), whereas conventional cardiotoxins increases it. At 100 mg/kg, intraperitoneal injection into mice provokes labored breathing, impaired locomotion, lack of response to external stimuli, and death (after 30 minutes). The chain is Beta-cardiotoxin CTX9 from Ophiophagus hannah (King cobra).